The chain runs to 275 residues: Urease accessory protein UreD (275 aa).

It belongs to the UreD family. UreD, UreF and UreG form a complex that acts as a GTP-hydrolysis-dependent molecular chaperone, activating the urease apoprotein by helping to assemble the nickel containing metallocenter of UreC. The UreE protein probably delivers the nickel.

It is found in the cytoplasm. In terms of biological role, required for maturation of urease via the functional incorporation of the urease nickel metallocenter. This Cereibacter sphaeroides (strain ATCC 17029 / ATH 2.4.9) (Rhodobacter sphaeroides) protein is Urease accessory protein UreD.